The primary structure comprises 416 residues: Multifunctional CCA protein (416 aa).

2 residues coordinate ATP: glycine 8 and arginine 11. Glycine 8 and arginine 11 together coordinate CTP. Residues glutamate 21 and aspartate 23 each coordinate Mg(2+). Residues arginine 91, arginine 137, and arginine 140 each coordinate ATP. CTP contacts are provided by arginine 91, arginine 137, and arginine 140. Residues 228–329 (TGIHTLMVLK…LKLFDAVDAW (102 aa)) enclose the HD domain.

It belongs to the tRNA nucleotidyltransferase/poly(A) polymerase family. Bacterial CCA-adding enzyme type 1 subfamily. In terms of assembly, monomer. Can also form homodimers and oligomers. Mg(2+) serves as cofactor. It depends on Ni(2+) as a cofactor.

It catalyses the reaction a tRNA precursor + 2 CTP + ATP = a tRNA with a 3' CCA end + 3 diphosphate. The enzyme catalyses a tRNA with a 3' CCA end + 2 CTP + ATP = a tRNA with a 3' CCACCA end + 3 diphosphate. Catalyzes the addition and repair of the essential 3'-terminal CCA sequence in tRNAs without using a nucleic acid template. Adds these three nucleotides in the order of C, C, and A to the tRNA nucleotide-73, using CTP and ATP as substrates and producing inorganic pyrophosphate. tRNA 3'-terminal CCA addition is required both for tRNA processing and repair. Also involved in tRNA surveillance by mediating tandem CCA addition to generate a CCACCA at the 3' terminus of unstable tRNAs. While stable tRNAs receive only 3'-terminal CCA, unstable tRNAs are marked with CCACCA and rapidly degraded. The chain is Multifunctional CCA protein from Photorhabdus laumondii subsp. laumondii (strain DSM 15139 / CIP 105565 / TT01) (Photorhabdus luminescens subsp. laumondii).